The chain runs to 480 residues: Coronin-2B (480 aa).

5 WD repeats span residues 85–125, 135–177, 179–217, 220–263, and 265–308; these read GHQG…LKRN, GHSR…KMID, HTDV…VLQE, CKNH…MPMI, and EEID…PYLS. A coiled-coil region spans residues 436–479; sequence NELLRMFFRQQDEIRRLKEELAQKDIRLRQLQLELKNLRNNPKN.

It belongs to the WD repeat coronin family. In terms of assembly, binds to F-actin and to vinculin.

The protein localises to the cytoplasm. It is found in the cytoskeleton. Functionally, may play a role in the reorganization of neuronal actin structure. The protein is Coronin-2B (Coro2b) of Mus musculus (Mouse).